The chain runs to 407 residues: E3 ubiquitin-protein ligase TRIM13 (407 aa).

The RING-type zinc finger occupies 10 to 58 (CPICCSLFDDPRVLPCSHNFCKKCLEGLLEGNVRNSLWRPSPFKCPTCR). Residues 89–131 (PKMPVCKGHLGQPLNIFCVTDMQLICGICATRGEHTKHVFSSI) form a B box-type zinc finger. Cysteine 94, histidine 97, cysteine 117, and histidine 123 together coordinate Zn(2+). Residues 172–200 (LQLLTKDSDKVKEFFEKLQHTLDQKKNEI) are a coiled coil. Residues 316–336 (LLLMMVVLLGLLIFFGPTVFL) traverse the membrane as a helical segment.

This sequence belongs to the TRIM/RBCC family. As to quaternary structure, interacts (via C-terminal domain) with VCP. Interacts with AKT1; the interaction ubiquitinates AKT1 and leads to its proteasomal degradation. Interacts with MDM2; the interaction ubiquitinates AKT1 and leads to its proteasomal degradation. Interacts with p62/SQSTM1. Interacts with TRAF6. Interacts with IKBKG/NEMO. Auto-ubiquitinated; requires the RING-type zinc finger. Auto-polyubiquitination leads to proteasomal degradation.

The protein resides in the endoplasmic reticulum membrane. It catalyses the reaction S-ubiquitinyl-[E2 ubiquitin-conjugating enzyme]-L-cysteine + [acceptor protein]-L-lysine = [E2 ubiquitin-conjugating enzyme]-L-cysteine + N(6)-ubiquitinyl-[acceptor protein]-L-lysine.. Its pathway is protein modification; protein ubiquitination. Functionally, endoplasmic reticulum (ER) membrane anchored E3 ligase involved in the retrotranslocation and turnover of membrane and secretory proteins from the ER through a set of processes named ER-associated degradation (ERAD). This process acts on misfolded proteins as well as in the regulated degradation of correctly folded proteins. Enhances ionizing radiation-induced p53/TP53 stability and apoptosis via ubiquitinating MDM2 and AKT1 and decreasing AKT1 kinase activity through MDM2 and AKT1 proteasomal degradation. Regulates ER stress-induced autophagy, and may act as a tumor suppressor. Also plays a role in innate immune response by stimulating NF-kappa-B activity in the TLR2 signaling pathway. Ubiquitinates TRAF6 via the 'Lys-29'-linked polyubiquitination chain resulting in NF-kappa-B activation. Participates as well in T-cell receptor-mediated NF-kappa-B activation. In the presence of TNF, modulates the IKK complex by regulating IKBKG/NEMO ubiquitination leading to the repression of NF-kappa-B. In Mus musculus (Mouse), this protein is E3 ubiquitin-protein ligase TRIM13 (Trim13).